The sequence spans 25 residues: Snaclec bothroalternin subunit alpha/beta (25 aa).

The C-type lectin domain occupies 1–25 (DCPSDWSNHEGHCYRVFNEWMNWAD). Cysteine 2 and cysteine 13 are joined by a disulfide.

This sequence belongs to the snaclec family. As to quaternary structure, heterodimer of subunits alpha and beta; disulfide-linked. As to expression, expressed by the venom gland.

It localises to the secreted. Functionally, thrombin (F2) inhibitor that inhibits aggregation of rabbit platelets induced by alpha-thrombin. The chain is Snaclec bothroalternin subunit alpha/beta from Bothrops alternatus (Urutu).